A 150-amino-acid chain; its full sequence is D-aminoacyl-tRNA deacylase (150 aa).

The Gly-cisPro motif, important for rejection of L-amino acids motif lies at 136 to 137; sequence GP.

Belongs to the DTD family. Homodimer.

It localises to the cytoplasm. The enzyme catalyses glycyl-tRNA(Ala) + H2O = tRNA(Ala) + glycine + H(+). It catalyses the reaction a D-aminoacyl-tRNA + H2O = a tRNA + a D-alpha-amino acid + H(+). In terms of biological role, an aminoacyl-tRNA editing enzyme that deacylates mischarged D-aminoacyl-tRNAs. Also deacylates mischarged glycyl-tRNA(Ala), protecting cells against glycine mischarging by AlaRS. Acts via tRNA-based rather than protein-based catalysis; rejects L-amino acids rather than detecting D-amino acids in the active site. By recycling D-aminoacyl-tRNA to D-amino acids and free tRNA molecules, this enzyme counteracts the toxicity associated with the formation of D-aminoacyl-tRNA entities in vivo and helps enforce protein L-homochirality. The protein is D-aminoacyl-tRNA deacylase of Staphylococcus carnosus (strain TM300).